Here is an 82-residue protein sequence, read N- to C-terminus: ATP synthase subunit c, chloroplastic (82 aa).

At Met-1 the chain carries N-formylmethionine. The next 2 membrane-spanning stretches (helical) occupy residues 3–23 and 57–77; these read PIVA…AAIG and FAFM…LLFA.

Belongs to the ATPase C chain family. In terms of assembly, F-type ATPases have 2 components, F(1) - the catalytic core - and F(0) - the membrane proton channel. F(1) has five subunits: alpha(3), beta(3), gamma(1), delta(1), epsilon(1). F(0) has four main subunits: a(1), b(1), b'(1) and c(10-14). The alpha and beta chains form an alternating ring which encloses part of the gamma chain. F(1) is attached to F(0) by a central stalk formed by the gamma and epsilon chains, while a peripheral stalk is formed by the delta, b and b' chains.

It localises to the plastid. It is found in the chloroplast thylakoid membrane. Its function is as follows. F(1)F(0) ATP synthase produces ATP from ADP in the presence of a proton or sodium gradient. F-type ATPases consist of two structural domains, F(1) containing the extramembraneous catalytic core and F(0) containing the membrane proton channel, linked together by a central stalk and a peripheral stalk. During catalysis, ATP synthesis in the catalytic domain of F(1) is coupled via a rotary mechanism of the central stalk subunits to proton translocation. In terms of biological role, key component of the F(0) channel; it plays a direct role in translocation across the membrane. A homomeric c-ring of between 10-14 subunits forms the central stalk rotor element with the F(1) delta and epsilon subunits. In Chlamydomonas reinhardtii (Chlamydomonas smithii), this protein is ATP synthase subunit c, chloroplastic.